We begin with the raw amino-acid sequence, 500 residues long: Lysine--tRNA ligase (500 aa).

Glu-410 and Glu-417 together coordinate Mg(2+).

The protein belongs to the class-II aminoacyl-tRNA synthetase family. In terms of assembly, homodimer. Mg(2+) is required as a cofactor.

The protein localises to the cytoplasm. The catalysed reaction is tRNA(Lys) + L-lysine + ATP = L-lysyl-tRNA(Lys) + AMP + diphosphate. The polypeptide is Lysine--tRNA ligase (Shewanella sp. (strain ANA-3)).